We begin with the raw amino-acid sequence, 288 residues long: Bifunctional protein FolD (288 aa).

Residues 166-168 (GAS) and Ile-232 each bind NADP(+).

It belongs to the tetrahydrofolate dehydrogenase/cyclohydrolase family. In terms of assembly, homodimer.

The enzyme catalyses (6R)-5,10-methylene-5,6,7,8-tetrahydrofolate + NADP(+) = (6R)-5,10-methenyltetrahydrofolate + NADPH. The catalysed reaction is (6R)-5,10-methenyltetrahydrofolate + H2O = (6R)-10-formyltetrahydrofolate + H(+). It functions in the pathway one-carbon metabolism; tetrahydrofolate interconversion. Its function is as follows. Catalyzes the oxidation of 5,10-methylenetetrahydrofolate to 5,10-methenyltetrahydrofolate and then the hydrolysis of 5,10-methenyltetrahydrofolate to 10-formyltetrahydrofolate. This Cronobacter sakazakii (strain ATCC BAA-894) (Enterobacter sakazakii) protein is Bifunctional protein FolD.